Here is a 481-residue protein sequence, read N- to C-terminus: ATP synthase subunit beta, chloroplastic (481 aa).

162 to 169 serves as a coordination point for ATP; that stretch reads GGAGVGKT.

The protein belongs to the ATPase alpha/beta chains family. As to quaternary structure, F-type ATPases have 2 components, F(1) - the catalytic core - and F(0) - the membrane proton channel. F(1) has five subunits: alpha(3), beta(3), gamma(1), delta(1), epsilon(1). F(0) has four main subunits: a(1), b(1), b'(1) and c(10-14). The alpha and beta chains form an alternating ring which encloses part of the gamma chain. F(1) is attached to F(0) by a central stalk formed by the gamma and epsilon chains, while a peripheral stalk is formed by the delta, b and b' chains.

It is found in the plastid. It localises to the chloroplast thylakoid membrane. The enzyme catalyses ATP + H2O + 4 H(+)(in) = ADP + phosphate + 5 H(+)(out). F(1)F(0) ATP synthase produces ATP from ADP in the presence of a proton or sodium gradient. F-type ATPases consist of two structural domains, F(1) containing the extramembraneous catalytic core and F(0) containing the membrane proton channel, linked together by a central stalk and a peripheral stalk. During catalysis, ATP synthesis in the catalytic domain of F(1) is coupled via a rotary mechanism of the central stalk subunits to proton translocation. In terms of biological role, produces ATP from ADP in the presence of a proton gradient across the membrane. The catalytic sites are hosted primarily by the beta subunits. The sequence is that of ATP synthase subunit beta, chloroplastic from Chlamydomonas reinhardtii (Chlamydomonas smithii).